A 215-amino-acid chain; its full sequence is Small ribosomal subunit protein uS7 (215 aa).

This sequence belongs to the universal ribosomal protein uS7 family. In terms of assembly, part of the 30S ribosomal subunit.

Its function is as follows. One of the primary rRNA binding proteins, it binds directly to 16S rRNA where it nucleates assembly of the head domain of the 30S subunit. Is located at the subunit interface close to the decoding center. The chain is Small ribosomal subunit protein uS7 from Thermococcus onnurineus (strain NA1).